Consider the following 412-residue polypeptide: AT-rich interactive domain-containing protein 3C (412 aa).

Over residues 1–23 the composition is skewed to low complexity; it reads MEALQKQQAARLAQGVGPLAPAC. The interval 1 to 96 is disordered; that stretch reads MEALQKQQAA…SSQPPGLHPH (96 aa). Over residues 50-73 the composition is skewed to acidic residues; it reads AEEEEDAEEDEEKREEAGAEEEAA. Residues 78 to 87 are compositionally biased toward low complexity; the sequence is PGAQGPSSPS. One can recognise an ARID domain in the interval 113–205; the sequence is DPKRKEFLDD…YLYPYECETR (93 aa). Disordered stretches follow at residues 232 to 278 and 388 to 412; these read TPLF…AHAC and PVPASQGPTNPAPPPSTGPPSSILP. A compositionally biased stretch (polar residues) spans 259 to 272; sequence TQSSPGPAQGSTSG. An REKLES domain is found at 304 to 389; that stretch reads LALGPTREKL…GVLFARRQPV (86 aa).

As to quaternary structure, interacts (via REKLES DOMAIN) with NPM1; the interaction mediates ARID3C nuclear shuttling.

The protein localises to the nucleus. Its function is as follows. Transcription factor involved in monocyte-to-macrophage differentiation. Forms a complex with NPM1 to translocate to the nucleus, acting as a transcription factor that promotes the expression of the genes involved in macrophage differentiation, such as STAT3, STAT1 and JUNB. The chain is AT-rich interactive domain-containing protein 3C from Homo sapiens (Human).